The primary structure comprises 131 residues: Interleukin-13 (131 aa).

A signal peptide spans 1–18; it reads MALWVTAVLALACLGGLA. 4 N-linked (GlcNAc...) asparagine glycosylation sites follow: Asn-42, Asn-53, Asn-76, and Asn-121. 2 disulfides stabilise this stretch: Cys-52–Cys-80 and Cys-68–Cys-94.

It belongs to the IL-4/IL-13 family. As to quaternary structure, interacts with IL13RA2.

The protein resides in the secreted. In terms of biological role, cytokine that plays important roles in allergic inflammation and immune response to parasite infection. Synergizes with IL2 in regulating interferon-gamma synthesis. Stimulates B-cell proliferation, and activation of eosinophils, basophils, and mast cells. Plays an important role in controlling IL33 activity by modulating the production of transmembrane and soluble forms of interleukin-1 receptor-like 1/IL1RL1. Displays the capacity to antagonize Th1-driven proinflammatory immune response and downregulates synthesis of many proinflammatory cytokines including IL1, IL6, IL10, IL12 and TNF-alpha through a mechanism that partially involves suppression of NF-kappa-B. Also functions on nonhematopoietic cells, including endothelial cells where it induces vascular cell adhesion protein 1/VCAM1, which is important in the recruitment of eosinophils. Exerts its biological effects through its receptors which comprises the IL4R chain and the IL13RA1 chain, to activate JAK1 and TYK2, leading to the activation of STAT6. Aside from IL13RA1, another receptor IL13RA2 acts as a high affinity decoy for IL13 and mediates internalization and depletion of extracellular IL13. This Rattus norvegicus (Rat) protein is Interleukin-13 (Il13).